Here is a 508-residue protein sequence, read N- to C-terminus: MKLYQWQIFRWFFETLNCSLGRAYKASKRIQYIKKDYSFYKNTILFSKGSWQAINLYTNTELRNTLFIIYWSLLEYRISLCFLNLLRKIESIQFKKLSVISFILNLHSSLSHVNKQLQILSKVLFDRFYFYLWKNMYFSLLLHNSLSRFVKESIEESEQSGFNNENKKDFQDETYFVLNESLEKDFSRIREMNRKLAWIEVTLNDLNTWKSYYLFFPFLSEMKNTPQNESSFKLKNFEITTPAYDSTGFIPRSISRTLSRFQIELMGQSSSLVLQEFRSAKYQALASIQYIGCLIFLPWIISRSLKEWFLEPWIKFWWDTYQSQISLNSFQEERASEGLQEVEEPLWLDKLVSNFLKNQSQDLNIEIYGETIQLIRMYNENSIQTILHLLTGMICFTTLGALFILGKKRLSVLNSWIQESFYSLSDTMKAFAILLLTDLCIGFHSPHGWEVVIGSSLEHLGFAHNKHIISCFVSTFPVILDTVSKYWIFRHLNRISPSIVATYHTMNE.

5 consecutive transmembrane segments (helical) span residues 66–86 (LFII…LNLL), 282–302 (YQAL…WIIS), 386–406 (ILHL…FILG), 433–453 (ILLL…EVVI), and 468–488 (IISC…KYWI).

This sequence belongs to the CemA family.

Its subcellular location is the plastid. It localises to the chloroplast inner membrane. The catalysed reaction is K(+)(in) + H(+)(out) = K(+)(out) + H(+)(in). Functionally, contributes to K(+)/H(+) antiport activity by supporting proton efflux to control proton extrusion and homeostasis in chloroplasts in a light-dependent manner to modulate photosynthesis. Prevents excessive induction of non-photochemical quenching (NPQ) under continuous-light conditions. Indirectly promotes efficient inorganic carbon uptake into chloroplasts. The sequence is that of Potassium/proton antiporter CemA from Anthoceros angustus (Hornwort).